A 415-amino-acid chain; its full sequence is Protein maelstrom homolog (415 aa).

A DNA-binding region (HMG box) is located at residues 4–73; that stretch reads KKAARNAYFF…DPDSTSTYND (70 aa). Positions 367–399 are disordered; it reads SSDPKYSTDKSERSSFEPRGVKPYQGPSGGGRG. Residues 372–386 are compositionally biased toward basic and acidic residues; it reads YSTDKSERSSFEPRG.

It belongs to the maelstrom family.

The protein resides in the cytoplasm. It is found in the nucleus. Its function is as follows. Plays a central role during spermatogenesis by repressing transposable elements and preventing their mobilization, which is essential for the germline integrity. Acts via the piRNA metabolic process, which mediates the repression of transposable elements during meiosis by forming complexes composed of piRNAs and Piwi proteins and governs the methylation and subsequent repression of transposons. Its association with piP-bodies suggests a participation in the secondary piRNAs metabolic process. Required for the localization of germ-cell factors to the meiotic nuage. The chain is Protein maelstrom homolog (mael) from Xenopus tropicalis (Western clawed frog).